Consider the following 47-residue polypeptide: Short neurotoxin D2A (47 aa).

2 cysteine pairs are disulfide-bonded: Cys3/Cys24 and Cys17/Cys39.

As to expression, expressed by the venom gland.

Its subcellular location is the secreted. The protein is Short neurotoxin D2A of Micrurus pyrrhocryptus (Coral snake).